We begin with the raw amino-acid sequence, 92 residues long: Protein LSO2 (92 aa).

2 stretches are compositionally biased toward basic and acidic residues: residues 1–10 (MGKRFSESAA) and 38–72 (EASKWEQGSRKENAKKLEEEQKRQEKARAKKERDA). The segment at 1–92 (MGKRFSESAA…KGGKGKRKMK (92 aa)) is disordered. Positions 17–80 (ARKRDQAHAK…DALLTAEEEQ (64 aa)) form a coiled coil.

This sequence belongs to the CCDC124 family. Associates with translationally inactive ribosomes in the nonrotated state. LSO2 bridges the decoding sites of the small with the GTPase activating center (GAC) of the large subunit. This position allows accommodation of the DOM34-dependent ribosome recycling system, which splits LSO2-containing ribosomes.

The protein resides in the nucleus. The protein localises to the cytoplasm. Functionally, ribosome-binding protein involved in ribosome hibernation by associating with translationally inactive ribosomes. Required for translational recovery after starvation from stationary phase. May facilitate rapid translation reactivation by stabilizing the recycling-competent state of inactive ribosomes. The chain is Protein LSO2 from Saccharomyces cerevisiae (strain ATCC 204508 / S288c) (Baker's yeast).